The chain runs to 77 residues: Acyl carrier protein (77 aa).

The Carrier domain occupies Met-1–Gln-76. Position 36 is an O-(pantetheine 4'-phosphoryl)serine (Ser-36).

This sequence belongs to the acyl carrier protein (ACP) family. 4'-phosphopantetheine is transferred from CoA to a specific serine of apo-ACP by AcpS. This modification is essential for activity because fatty acids are bound in thioester linkage to the sulfhydryl of the prosthetic group.

The protein resides in the cytoplasm. The protein operates within lipid metabolism; fatty acid biosynthesis. Its function is as follows. Carrier of the growing fatty acid chain in fatty acid biosynthesis. The sequence is that of Acyl carrier protein from Campylobacter lari (strain RM2100 / D67 / ATCC BAA-1060).